Reading from the N-terminus, the 203-residue chain is UPF0637 protein MCCL_0722 (203 aa).

Belongs to the UPF0637 family.

The chain is UPF0637 protein MCCL_0722 from Macrococcus caseolyticus (strain JCSC5402) (Macrococcoides caseolyticum).